The primary structure comprises 358 residues: Diels-Alderase phmD (358 aa).

It belongs to the Diels-Alderase family.

It functions in the pathway mycotoxin biosynthesis. Its function is as follows. Diels-Alderase; part of the gene cluster that mediates the biosynthesis of the mycotoxins phomacins, leucine-derived cytochalasans with potent actin polymerization-inhibitory activities and monocot-specific antigerminative activities. The first step in the pathway is catalyzed by the hybrid PKS-NRPS phmA, assisted by the enoyl reductase phmE, that are responsible for fusion of the leucine precursor and the polyketide backbone to produce a 2-pyrrolidone intermediate. The polyketide synthase module (PKS) of phmA is responsible for the synthesis of the polyketide backbone and the downstream nonribosomal peptide synthetase (NRPS) amidates the carboxyl end of the polyketide with the leucine precursor. Because phmA lacks a designated enoylreductase (ER) domain, the required activity is provided the enoyl reductase phmE. Reduction by the hydrolyase phmG, followed by dehydration and intra-molecular Diels-Alder cyclization by the Diels-Alderase phmD then yield the required isoindolone-fused macrocycle. A number of oxidative steps catalyzed by the tailoring cytochrome P450 monooxygenase phmB, the FAD-linked oxidoreductase phmC and the short-chain dehydrogenase/reductase phmF, are further required to afford the final products, phomacin D and phomacin E. The sequence is that of Diels-Alderase phmD from Phaeosphaeria nodorum (strain SN15 / ATCC MYA-4574 / FGSC 10173) (Glume blotch fungus).